Here is a 333-residue protein sequence, read N- to C-terminus: Ribokinase (333 aa).

Substrate-binding positions include 10–12 (NYD), 38–42 (GKGLN), and Glu149. ATP is bound by residues Asn193 and 248-253 (TLGSRG). K(+) contacts are provided by Asp277 and Thr279. 282-283 (GD) contacts ATP. Asp283 is a substrate binding site. The active-site Proton acceptor is the Asp283. 4 residues coordinate K(+): Thr313, Arg316, Gly318, and Ser322.

The protein belongs to the carbohydrate kinase PfkB family. Ribokinase subfamily. As to quaternary structure, homodimer. Mg(2+) serves as cofactor.

Its subcellular location is the cytoplasm. It is found in the nucleus. It carries out the reaction D-ribose + ATP = D-ribose 5-phosphate + ADP + H(+). It participates in carbohydrate metabolism; D-ribose degradation; D-ribose 5-phosphate from beta-D-ribopyranose: step 2/2. With respect to regulation, activated by a monovalent cation that binds near, but not in, the active site. The most likely occupant of the site in vivo is potassium. Ion binding induces a conformational change that may alter substrate affinity. Catalyzes the phosphorylation of ribose at O-5 in a reaction requiring ATP and magnesium. The resulting D-ribose-5-phosphate can then be used either for sythesis of nucleotides, histidine, and tryptophan, or as a component of the pentose phosphate pathway. This chain is Ribokinase, found in Saccharomyces cerevisiae (strain ATCC 204508 / S288c) (Baker's yeast).